Consider the following 423-residue polypeptide: Sporulation-regulated protein 28 (423 aa).

The Septin-type G domain maps to 28 to 342; it reads KGLQLSILLL…ENYRAKVLTE (315 aa). Residues 38–45 form a G1 motif region; that stretch reads GEKGSGKS. GTP contacts are provided by residues 38-45, G124, 204-212, and R291; these read GEKGSGKS and KADGLTETE. Positions 121–124 are G3 motif; it reads LFPG. The tract at residues 203 to 206 is G4 motif; sequence PKAD. Residues 360-381 show a composition bias toward polar residues; the sequence is RGSVSNVSTRRNSASRTLGNPD. A disordered region spans residues 360 to 385; the sequence is RGSVSNVSTRRNSASRTLGNPDTNDE. Residues 384-417 adopt a coiled-coil conformation; that stretch reads DENAYQIHKEIDEKNRIIEDYQRKIDLLEKMLAA.

It belongs to the TRAFAC class TrmE-Era-EngA-EngB-Septin-like GTPase superfamily. Septin GTPase family. In terms of assembly, interacts with itself. Interacts with CDC11 and SPR3; probably to form a ring at the bud neck.

The protein localises to the membrane. The protein resides in the bud neck. Functionally, septins are GTPases involved in cytokinesis that assemble into filaments and form a ring at the cleavage site. May act by recruiting MYO1 and HOF1, a protein involved in septation, to the site of cleavage. Septins are also involved in cell morphogenesis, bud site selection, chitin deposition, cell cycle regulation, cell compartmentalization and spore wall formation. The chain is Sporulation-regulated protein 28 (SPR28) from Saccharomyces cerevisiae (strain ATCC 204508 / S288c) (Baker's yeast).